The chain runs to 105 residues: Small ribosomal subunit protein uS10 (105 aa).

It belongs to the universal ribosomal protein uS10 family. As to quaternary structure, part of the 30S ribosomal subunit.

Functionally, involved in the binding of tRNA to the ribosomes. The polypeptide is Small ribosomal subunit protein uS10 (Lawsonia intracellularis (strain PHE/MN1-00)).